A 336-amino-acid polypeptide reads, in one-letter code: Opsin-1, short-wave-sensitive 1 (336 aa).

Residues 1-29 (MDAWAVQFGNASKVSPFEGEQYHIAPKWA) lie on the Extracellular side of the membrane. An N-linked (GlcNAc...) asparagine glycan is attached at Asn10. Residues 30-54 (FYLQAAFMGFVFIVGTPMNGIVLFV) form a helical membrane-spanning segment. Over 55–66 (TMKYKKLRQPLN) the chain is Cytoplasmic. A helical transmembrane segment spans residues 67–91 (YILVNISLAGFIFDTFSVSQVFVCA). The Extracellular portion of the chain corresponds to 92 to 106 (ARGYYFLGYTLCAME). Cys103 and Cys180 are oxidised to a cystine. A helical transmembrane segment spans residues 107–126 (AAMGSIAGLVTGWSLAVLAF). Topologically, residues 127–145 (ERYVVICKPFGSFKFGQGQ) are cytoplasmic. Residues 146–169 (AVGAVVFTWIIGTACATPPFFGWS) form a helical membrane-spanning segment. The Extracellular portion of the chain corresponds to 170–195 (RYIPEGLGTACGPDWYTKSEEYNSES). Residues 196–223 (YTYFLLITCFMMPMTIIIFSYSQLLGAL) form a helical membrane-spanning segment. The Cytoplasmic segment spans residues 224–245 (RAVAAQQAESESTQKAEREVSR). The helical transmembrane segment at 246 to 269 (MVVVMVGSFVLCYAPYAVTAMYFA) threads the bilayer. The Extracellular portion of the chain corresponds to 270–277 (NSDEPNKD). The chain crosses the membrane as a helical span at residues 278–302 (YRLVAIPAFFSKSSCVYNPLIYAFM). At Lys289 the chain carries N6-(retinylidene)lysine. The Cytoplasmic segment spans residues 303–336 (NKQFNACIMETVFGKKIDESSEVSSKTETSSVSA).

Belongs to the G-protein coupled receptor 1 family. Opsin subfamily. In terms of processing, phosphorylated on some or all of the serine and threonine residues present in the C-terminal region. In terms of tissue distribution, retinal short single cones, outer and inner segments.

Its subcellular location is the membrane. Functionally, visual pigments are the light-absorbing molecules that mediate vision. They consist of an apoprotein, opsin, covalently linked to cis-retinal. This chain is Opsin-1, short-wave-sensitive 1 (opn1sw1), found in Danio rerio (Zebrafish).